We begin with the raw amino-acid sequence, 956 residues long: Glycine dehydrogenase (decarboxylating) 2 (956 aa).

Position 706 is an N6-(pyridoxal phosphate)lysine (Lys-706).

Belongs to the GcvP family. In terms of assembly, the glycine cleavage system is composed of four proteins: P, T, L and H. The cofactor is pyridoxal 5'-phosphate.

It catalyses the reaction N(6)-[(R)-lipoyl]-L-lysyl-[glycine-cleavage complex H protein] + glycine + H(+) = N(6)-[(R)-S(8)-aminomethyldihydrolipoyl]-L-lysyl-[glycine-cleavage complex H protein] + CO2. The glycine cleavage system catalyzes the degradation of glycine. The P protein binds the alpha-amino group of glycine through its pyridoxal phosphate cofactor; CO(2) is released and the remaining methylamine moiety is then transferred to the lipoamide cofactor of the H protein. The protein is Glycine dehydrogenase (decarboxylating) 2 of Colwellia psychrerythraea (strain 34H / ATCC BAA-681) (Vibrio psychroerythus).